The primary structure comprises 216 residues: Putative F-box protein At2g03610 (216 aa).

One can recognise an F-box domain in the interval 19–69; that stretch reads NQDWSKLCPDLLRPILESLSSIDFHRAKTVCSDWYSVWKTCKGYDSKWNQN.

In Arabidopsis thaliana (Mouse-ear cress), this protein is Putative F-box protein At2g03610.